Consider the following 309-residue polypeptide: Protein EXORDIUM-like 1 (309 aa).

Residues 1-23 form the signal peptide; that stretch reads MASFVMGYFLLFAVAFMCLDART.

It belongs to the EXORDIUM family.

It localises to the secreted. The protein resides in the extracellular space. It is found in the apoplast. May play a role in a brassinosteroid-dependent regulatory pathway that controls growth and development under low carbon and energy availability. In Arabidopsis thaliana (Mouse-ear cress), this protein is Protein EXORDIUM-like 1 (EXL1).